The chain runs to 232 residues: Phosphoglycolate phosphatase (232 aa).

Aspartate 8 functions as the Nucleophile in the catalytic mechanism. Positions 8 and 10 each coordinate Mg(2+). A substrate-binding site is contributed by lysine 156. Residues aspartate 179 and aspartate 183 each coordinate Mg(2+).

This sequence belongs to the archaeal SPP-like hydrolase family. Mg(2+) is required as a cofactor.

It carries out the reaction 2-phosphoglycolate + H2O = glycolate + phosphate. Its function is as follows. Catalyzes the dephosphorylation of 2-phosphoglycolate. The chain is Phosphoglycolate phosphatase from Methanopyrus kandleri (strain AV19 / DSM 6324 / JCM 9639 / NBRC 100938).